An 832-amino-acid chain; its full sequence is Protein wech (832 aa).

Residues 1–14 (MMELLSNNSVPQQM) show a composition bias toward polar residues. Positions 1-42 (MMELLSNNSVPQQMASSNAPSANNVAHSSTANGSGGGSVSSN) are disordered. Positions 15–32 (ASSNAPSANNVAHSSTAN) are enriched in low complexity. Serine 107 carries the post-translational modification Phosphoserine. B box-type zinc fingers lie at residues 118–163 (NSSI…IVSL) and 184–224 (SGNF…YASI). Cysteine 123, cysteine 126, cysteine 145, histidine 149, cysteine 189, histidine 192, cysteine 211, and histidine 216 together coordinate Zn(2+). Residues serine 470, serine 475, and serine 506 each carry the phosphoserine modification. NHL repeat units lie at residues 537-580 (SLSF…FNPD), 584-627 (KFKF…FTAS), 631-674 (LLKF…FDSE), 680-722 (QIVF…IDPD), and 727-770 (LSVK…FNQN).

As to quaternary structure, interacts with the head domain of rhea and the kinase domain of Ilk. Interacts with AGO1. Interacts with mei-P26. As to expression, expressed in ovarian germline stem cells (at protein level). Expressed ubiquitously in all epithelial cells during early stages of embryogenesis. Specifically expressed at epidermal muscle attachment site.

In terms of biological role, vital for larval development. Plays a role in tumor formation. A crucial component for the physical link between integrins and the cytoskeleton in the epidermal muscle attachment sites. In Drosophila melanogaster (Fruit fly), this protein is Protein wech (wech).